A 295-amino-acid polypeptide reads, in one-letter code: Movement protein (295 aa).

The segment at 256 to 295 is disordered; it reads KKTNVKEESPTSDPQSGEVSSMTQSVPGAADTRIPKPRRR. The span at 266-281 shows a compositional bias: polar residues; it reads TSDPQSGEVSSMTQSV.

The protein belongs to the bromovirus movement protein family.

The protein localises to the host cell junction. It is found in the host plasmodesma. Transports viral genome to neighboring plant cells directly through plasmosdesmata, without any budding. The movement protein allows efficient cell to cell propagation, by bypassing the host cell wall barrier. Acts by forming a tubular structure at the host plasmodesmata, enlarging it enough to allow free passage of virion capsids. The chain is Movement protein from Broad bean mottle virus.